The chain runs to 365 residues: S-adenosylmethionine:tRNA ribosyltransferase-isomerase (365 aa).

The protein belongs to the QueA family. As to quaternary structure, monomer.

Its subcellular location is the cytoplasm. The enzyme catalyses 7-aminomethyl-7-carbaguanosine(34) in tRNA + S-adenosyl-L-methionine = epoxyqueuosine(34) in tRNA + adenine + L-methionine + 2 H(+). It participates in tRNA modification; tRNA-queuosine biosynthesis. Its function is as follows. Transfers and isomerizes the ribose moiety from AdoMet to the 7-aminomethyl group of 7-deazaguanine (preQ1-tRNA) to give epoxyqueuosine (oQ-tRNA). The chain is S-adenosylmethionine:tRNA ribosyltransferase-isomerase from Rickettsia peacockii (strain Rustic).